A 489-amino-acid polypeptide reads, in one-letter code: CUGBP Elav-like family member 1-A (489 aa).

3 consecutive RRM domains span residues 16–99 (IKMF…PADS), 108–188 (RKLF…FADT), and 404–482 (ANLF…LKRS). Positions 183-210 (VKFADTQKDKEQKRMTQQLQQQMQQLNA) are necessary for oligomerization and EDEN-dependent deadenylation.

The protein belongs to the CELF/BRUNOL family. Oligomer. Oligomerization is required for RNA-binding and EDEN-dependent deadenylation. Phosphorylated during oocyte maturation and dephosphorylated following egg activation. Dephosphorylation is calcium dependent and correlates with the increase in the activity of EDEN-dependent deadenylation.

The protein resides in the nucleus. Its subcellular location is the cytoplasm. Its function is as follows. RNA-binding protein implicated in the regulation of several post-transcriptional events. May be involved in pre-mRNA alternative splicing, mRNA translation activation and stability. Mediates the rapid and sequence-specific cytoplasmic deadenylation of EDEN-containing maternal mRNAs following fertilization. Binds to AU-rich sequences (AREs) of jun mRNA. Binds to the embryonic deadenylation element (EDEN) motif localized in the 3'-UTR of maternal mRNAs. Binds to RNA containing several repeats of the consensus sequence 5'-UGU-3'. EDEN-dependent deadenylation is enhanced by the presence of an additional cis element composed of three AUU repeats. This chain is CUGBP Elav-like family member 1-A (cugbp1-a), found in Xenopus laevis (African clawed frog).